We begin with the raw amino-acid sequence, 361 residues long: Histidinol-phosphate aminotransferase (361 aa).

The residue at position 219 (Lys-219) is an N6-(pyridoxal phosphate)lysine.

The protein belongs to the class-II pyridoxal-phosphate-dependent aminotransferase family. Histidinol-phosphate aminotransferase subfamily. Homodimer. Pyridoxal 5'-phosphate is required as a cofactor.

It carries out the reaction L-histidinol phosphate + 2-oxoglutarate = 3-(imidazol-4-yl)-2-oxopropyl phosphate + L-glutamate. It functions in the pathway amino-acid biosynthesis; L-histidine biosynthesis; L-histidine from 5-phospho-alpha-D-ribose 1-diphosphate: step 7/9. This is Histidinol-phosphate aminotransferase from Cereibacter sphaeroides (strain ATCC 17029 / ATH 2.4.9) (Rhodobacter sphaeroides).